The sequence spans 512 residues: Methionine--tRNA ligase (512 aa).

Positions 11-21 (YYASGKPHIGH) match the 'HIGH' region motif. Cys-126, Cys-129, Cys-143, and His-147 together coordinate Zn(2+). A 'KMSKS' region motif is present at residues 301–305 (KMSKS). ATP is bound at residue Lys-304.

It belongs to the class-I aminoacyl-tRNA synthetase family. MetG type 2A subfamily. Monomer. It depends on Zn(2+) as a cofactor.

Its subcellular location is the cytoplasm. It catalyses the reaction tRNA(Met) + L-methionine + ATP = L-methionyl-tRNA(Met) + AMP + diphosphate. Its function is as follows. Is required not only for elongation of protein synthesis but also for the initiation of all mRNA translation through initiator tRNA(fMet) aminoacylation. The polypeptide is Methionine--tRNA ligase (metG) (Mycoplasma genitalium (strain ATCC 33530 / DSM 19775 / NCTC 10195 / G37) (Mycoplasmoides genitalium)).